The following is a 371-amino-acid chain: DNA replication and repair protein RecF (371 aa).

Glycine 30 to threonine 37 contributes to the ATP binding site.

The protein belongs to the RecF family.

It is found in the cytoplasm. In terms of biological role, the RecF protein is involved in DNA metabolism; it is required for DNA replication and normal SOS inducibility. RecF binds preferentially to single-stranded, linear DNA. It also seems to bind ATP. This Staphylococcus epidermidis (strain ATCC 12228 / FDA PCI 1200) protein is DNA replication and repair protein RecF.